The sequence spans 284 residues: Release factor glutamine methyltransferase (284 aa).

Residues 123-127 (GTGTG), Asp-146, Trp-174, and Asn-189 contribute to the S-adenosyl-L-methionine site. 189 to 192 (NPPY) provides a ligand contact to substrate.

It belongs to the protein N5-glutamine methyltransferase family. PrmC subfamily.

It catalyses the reaction L-glutaminyl-[peptide chain release factor] + S-adenosyl-L-methionine = N(5)-methyl-L-glutaminyl-[peptide chain release factor] + S-adenosyl-L-homocysteine + H(+). In terms of biological role, methylates the class 1 translation termination release factors RF1/PrfA and RF2/PrfB on the glutamine residue of the universally conserved GGQ motif. The protein is Release factor glutamine methyltransferase of Francisella tularensis subsp. tularensis (strain SCHU S4 / Schu 4).